The primary structure comprises 317 residues: 2,3-dihydroxyphenylpropionate/2,3-dihydroxicinnamic acid 1,2-dioxygenase 2 (317 aa).

The active-site Proton donor is H115. Catalysis depends on H179, which acts as the Proton acceptor.

It belongs to the LigB/MhpB extradiol dioxygenase family. As to quaternary structure, homotetramer. Requires Fe(2+) as cofactor.

The enzyme catalyses 3-(2,3-dihydroxyphenyl)propanoate + O2 = (2Z,4E)-2-hydroxy-6-oxonona-2,4-dienedioate + H(+). It catalyses the reaction (2E)-3-(2,3-dihydroxyphenyl)prop-2-enoate + O2 = (2Z,4E,7E)-2-hydroxy-6-oxonona-2,4,7-trienedioate + H(+). Its pathway is aromatic compound metabolism; 3-phenylpropanoate degradation. Its function is as follows. Catalyzes the non-heme iron(II)-dependent oxidative cleavage of 2,3-dihydroxyphenylpropionic acid and 2,3-dihydroxicinnamic acid into 2-hydroxy-6-ketononadienedioate and 2-hydroxy-6-ketononatrienedioate, respectively. The protein is 2,3-dihydroxyphenylpropionate/2,3-dihydroxicinnamic acid 1,2-dioxygenase 2 of Dechloromonas aromatica (strain RCB).